The chain runs to 216 residues: Invasion protein InvF (216 aa).

Residues 112-210 form the HTH araC/xylS-type domain; it reads YWLVGYLLAQ…GVSPRKLSNI (99 aa). DNA-binding regions (H-T-H motif) lie at residues 129-150 and 177-200; these read RMLGEDYGVSYTHFRRLCSRAL and ITQLAVNHGYSSPSHFSSEIKELI.

In terms of biological role, transcriptional regulator required for the expression of several genes encoding type III secretion system SPI1 effector proteins. The interaction with SicA is necessary for the activation of sigDE (sopB pipC), sicAsipBCDA, and sopE. This is Invasion protein InvF (invF) from Salmonella typhi.